The chain runs to 240 residues: Ribonuclease PH (240 aa).

Phosphate contacts are provided by residues arginine 86 and 124-126; that span reads GTR.

Belongs to the RNase PH family. Homohexameric ring arranged as a trimer of dimers.

The catalysed reaction is tRNA(n+1) + phosphate = tRNA(n) + a ribonucleoside 5'-diphosphate. In terms of biological role, phosphorolytic 3'-5' exoribonuclease that plays an important role in tRNA 3'-end maturation. Removes nucleotide residues following the 3'-CCA terminus of tRNAs; can also add nucleotides to the ends of RNA molecules by using nucleoside diphosphates as substrates, but this may not be physiologically important. Probably plays a role in initiation of 16S rRNA degradation (leading to ribosome degradation) during starvation. In Rickettsia prowazekii (strain Madrid E), this protein is Ribonuclease PH.